The primary structure comprises 155 residues: 6,7-dimethyl-8-ribityllumazine synthase (155 aa).

5-amino-6-(D-ribitylamino)uracil is bound by residues Trp-23, 57–59 (AWE), and 81–83 (CVI). A (2S)-2-hydroxy-3-oxobutyl phosphate-binding site is contributed by 86–87 (DT). Catalysis depends on His-89, which acts as the Proton donor. Asn-114 contacts 5-amino-6-(D-ribitylamino)uracil. Position 128 (Arg-128) interacts with (2S)-2-hydroxy-3-oxobutyl phosphate.

Belongs to the DMRL synthase family. Forms an icosahedral capsid composed of 60 subunits, arranged as a dodecamer of pentamers.

The enzyme catalyses (2S)-2-hydroxy-3-oxobutyl phosphate + 5-amino-6-(D-ribitylamino)uracil = 6,7-dimethyl-8-(1-D-ribityl)lumazine + phosphate + 2 H2O + H(+). The protein operates within cofactor biosynthesis; riboflavin biosynthesis; riboflavin from 2-hydroxy-3-oxobutyl phosphate and 5-amino-6-(D-ribitylamino)uracil: step 1/2. Its function is as follows. Catalyzes the formation of 6,7-dimethyl-8-ribityllumazine by condensation of 5-amino-6-(D-ribitylamino)uracil with 3,4-dihydroxy-2-butanone 4-phosphate. This is the penultimate step in the biosynthesis of riboflavin. The polypeptide is 6,7-dimethyl-8-ribityllumazine synthase (Stenotrophomonas maltophilia (strain K279a)).